The primary structure comprises 475 residues: Ribulose bisphosphate carboxylase large chain (475 aa).

The propeptide occupies 1–2; the sequence is MS. P3 is modified (N-acetylproline). K14 carries the N6,N6,N6-trimethyllysine modification. Substrate-binding residues include N123 and T173. K175 functions as the Proton acceptor in the catalytic mechanism. K177 contacts substrate. Mg(2+) is bound by residues K201, D203, and E204. Residue K201 is modified to N6-carboxylysine. The Proton acceptor role is filled by H294. Substrate contacts are provided by R295, H327, and S379.

Belongs to the RuBisCO large chain family. Type I subfamily. As to quaternary structure, heterohexadecamer of 8 large chains and 8 small chains; disulfide-linked. The disulfide link is formed within the large subunit homodimers. It depends on Mg(2+) as a cofactor. In terms of processing, the disulfide bond which can form in the large chain dimeric partners within the hexadecamer appears to be associated with oxidative stress and protein turnover.

It is found in the plastid. Its subcellular location is the chloroplast. The catalysed reaction is 2 (2R)-3-phosphoglycerate + 2 H(+) = D-ribulose 1,5-bisphosphate + CO2 + H2O. It carries out the reaction D-ribulose 1,5-bisphosphate + O2 = 2-phosphoglycolate + (2R)-3-phosphoglycerate + 2 H(+). In terms of biological role, ruBisCO catalyzes two reactions: the carboxylation of D-ribulose 1,5-bisphosphate, the primary event in carbon dioxide fixation, as well as the oxidative fragmentation of the pentose substrate in the photorespiration process. Both reactions occur simultaneously and in competition at the same active site. The chain is Ribulose bisphosphate carboxylase large chain from Populus trichocarpa (Western balsam poplar).